The primary structure comprises 212 residues: Endonuclease III (212 aa).

The 20-residue stretch at 108-127 folds into the HhH domain; it reads FKELVKLPGVGRKTANVVLN. [4Fe-4S] cluster-binding residues include Cys187, Cys194, Cys197, and Cys203.

The protein belongs to the Nth/MutY family. The cofactor is [4Fe-4S] cluster.

The catalysed reaction is 2'-deoxyribonucleotide-(2'-deoxyribose 5'-phosphate)-2'-deoxyribonucleotide-DNA = a 3'-end 2'-deoxyribonucleotide-(2,3-dehydro-2,3-deoxyribose 5'-phosphate)-DNA + a 5'-end 5'-phospho-2'-deoxyribonucleoside-DNA + H(+). DNA repair enzyme that has both DNA N-glycosylase activity and AP-lyase activity. The DNA N-glycosylase activity releases various damaged pyrimidines from DNA by cleaving the N-glycosidic bond, leaving an AP (apurinic/apyrimidinic) site. The AP-lyase activity cleaves the phosphodiester bond 3' to the AP site by a beta-elimination, leaving a 3'-terminal unsaturated sugar and a product with a terminal 5'-phosphate. The polypeptide is Endonuclease III (Rickettsia prowazekii (strain Madrid E)).